Here is a 367-residue protein sequence, read N- to C-terminus: tRNA-specific 2-thiouridylase MnmA (367 aa).

ATP-binding positions include 7-14 and Met-33; that span reads AMSGGVDS. Cys-108 acts as the Nucleophile in catalysis. Cys-108 and Cys-200 are oxidised to a cystine. Gly-132 provides a ligand contact to ATP. Residues 150-152 form an interaction with tRNA region; sequence KDQ. Cys-200 (cysteine persulfide intermediate) is an active-site residue. The segment at 301 to 302 is interaction with tRNA; that stretch reads RY.

It belongs to the MnmA/TRMU family.

It is found in the cytoplasm. The catalysed reaction is S-sulfanyl-L-cysteinyl-[protein] + uridine(34) in tRNA + AH2 + ATP = 2-thiouridine(34) in tRNA + L-cysteinyl-[protein] + A + AMP + diphosphate + H(+). Its function is as follows. Catalyzes the 2-thiolation of uridine at the wobble position (U34) of tRNA, leading to the formation of s(2)U34. In Thermus thermophilus (strain ATCC BAA-163 / DSM 7039 / HB27), this protein is tRNA-specific 2-thiouridylase MnmA.